We begin with the raw amino-acid sequence, 425 residues long: Proline iminopeptidase (425 aa).

Residues 52–315 (PWLLYLQGGP…EFPALAWAQG (264 aa)) form the AB hydrolase-1 domain. S146 (nucleophile) is an active-site residue. Residue D351 is part of the active site. The active-site Proton donor is H404.

This sequence belongs to the peptidase S33 family. As to quaternary structure, homotetramer.

Its subcellular location is the cytoplasm. The enzyme catalyses Release of N-terminal proline from a peptide.. Higher activity toward long peptides. Acts on hydroxyproline beta-naphthylamide with almost as high an activity as on proline beta-naphthylamide. The polypeptide is Proline iminopeptidase (pip) (Aeromonas sobria).